The chain runs to 679 residues: UvrABC system protein B (679 aa).

The Helicase ATP-binding domain occupies 31-414; that stretch reads ENLTDGLAHQ…ELEKSGSEII (384 aa). 44 to 51 contacts ATP; that stretch reads GVTGSGKT. A Beta-hairpin motif is present at residues 97–120; the sequence is YYDYYQPEAYVPSSDTFIEKDASI. Positions 436–589 constitute a Helicase C-terminal domain; the sequence is QVDDLLSEAR…QTKYNEEHGI (154 aa). Residues 639–674 form the UVR domain; sequence QQQIKKLEQQMYKFAQDLEFEKAAAIRDQLHQLREQ.

It belongs to the UvrB family. As to quaternary structure, forms a heterotetramer with UvrA during the search for lesions. Interacts with UvrC in an incision complex.

The protein localises to the cytoplasm. Functionally, the UvrABC repair system catalyzes the recognition and processing of DNA lesions. A damage recognition complex composed of 2 UvrA and 2 UvrB subunits scans DNA for abnormalities. Upon binding of the UvrA(2)B(2) complex to a putative damaged site, the DNA wraps around one UvrB monomer. DNA wrap is dependent on ATP binding by UvrB and probably causes local melting of the DNA helix, facilitating insertion of UvrB beta-hairpin between the DNA strands. Then UvrB probes one DNA strand for the presence of a lesion. If a lesion is found the UvrA subunits dissociate and the UvrB-DNA preincision complex is formed. This complex is subsequently bound by UvrC and the second UvrB is released. If no lesion is found, the DNA wraps around the other UvrB subunit that will check the other stand for damage. This chain is UvrABC system protein B, found in Haemophilus influenzae (strain ATCC 51907 / DSM 11121 / KW20 / Rd).